The following is a 162-amino-acid chain: Large ribosomal subunit protein bL9 (162 aa).

It belongs to the bacterial ribosomal protein bL9 family.

Binds to the 23S rRNA. This Chlorobaculum parvum (strain DSM 263 / NCIMB 8327) (Chlorobium vibrioforme subsp. thiosulfatophilum) protein is Large ribosomal subunit protein bL9.